The following is a 160-amino-acid chain: Negative modulator of initiation of replication (160 aa).

This sequence belongs to the SeqA family. In terms of assembly, homodimer. Polymerizes to form helical filaments.

The protein resides in the cytoplasm. Negative regulator of replication initiation, which contributes to regulation of DNA replication and ensures that replication initiation occurs exactly once per chromosome per cell cycle. Binds to pairs of hemimethylated GATC sequences in the oriC region, thus preventing assembly of replication proteins and re-initiation at newly replicated origins. Repression is relieved when the region becomes fully methylated. This chain is Negative modulator of initiation of replication, found in Idiomarina loihiensis (strain ATCC BAA-735 / DSM 15497 / L2-TR).